The chain runs to 433 residues: Keratin, type I cytoskeletal 17 (433 aa).

The tract at residues 1-24 is disordered; the sequence is MTTTIRQFTSSSSIKGSSGLGGGS. The interval 1–83 is head; it reads MTTTIRQFTS…GGVDGLLAGG (83 aa). Phosphoserine occurs at positions 12 and 13. A Glycyl lysine isopeptide (Lys-Gly) (interchain with G-Cter in SUMO1); alternate cross-link involves residue lysine 15. Residue lysine 15 forms a Glycyl lysine isopeptide (Lys-Gly) (interchain with G-Cter in SUMO2); alternate linkage. A phosphoserine mark is found at serine 25, serine 32, serine 34, and serine 39. Serine 44 carries the post-translational modification Phosphoserine; by RPS6KA1. Residues 84 to 120 form a coil 1A region; the sequence is EKATMQNLNDRLASYLDKVRALEEANTELEVKIRDWY. An IF rod domain is found at 84–395; sequence EKATMQNLND…RLLEGEDAHL (312 aa). A Phosphothreonine modification is found at threonine 110. A linker 1 region spans residues 121 to 138; that stretch reads QKQAPGPARDYSAYYHTI. The interval 139–230 is coil 1B; it reads EDLKNKILVA…NHEEEMNALR (92 aa). Residues 231-250 form a linker 12 region; the sequence is GQVGGEINVEMDAAPGVDLS. Positions 251–392 are coil 2; that stretch reads RILSEMRDQY…TYRRLLEGED (142 aa). Lysine 278 is covalently cross-linked (Glycyl lysine isopeptide (Lys-Gly) (interchain with G-Cter in SUMO2)). At threonine 279 the chain carries Phosphothreonine. Serine 323 is modified (phosphoserine). Residues 393 to 433 are tail; it reads AHLTQYKPKEPVTTRQVRTIVEEVQDGKVISSREQVHQTTR. Glycyl lysine isopeptide (Lys-Gly) (interchain with G-Cter in SUMO1); alternate cross-links involve residues lysine 399, lysine 401, and lysine 420. Residues lysine 399, lysine 401, and lysine 420 each participate in a glycyl lysine isopeptide (Lys-Gly) (interchain with G-Cter in SUMO2); alternate cross-link.

The protein belongs to the intermediate filament family. Heterodimer of a type I and a type II keratin. KRT17 associates with KRT6 isomers (KRT6A or KRT6B). Interacts with TRADD and SFN. Phosphorylation at Ser-44 occurs in a growth- and stress-dependent fashion in skin keratinocytes, it has no effect on filament organization. Expressed strongly in outer root sheath and medulla region of hair follicle and in the early differentiating epithelial cells (trichocytes) within the hair bulb region. Weak expression in the matrix cells of hair bulb. Also present in the sweat gland within the skin, vibrissae follicle, salivary gland, tooth and thymus.

The protein localises to the cytoplasm. In terms of biological role, type I keratin involved in the formation and maintenance of various skin appendages, specifically in determining shape and orientation of hair. Required for the correct growth of hair follicles, in particular for the persistence of the anagen (growth) state. Modulates the function of TNF-alpha in the specific context of hair cycling. Regulates protein synthesis and epithelial cell growth through binding to the adapter protein SFN and by stimulating Akt/mTOR pathway. Involved in tissue repair. May be a marker of basal cell differentiation in complex epithelia and therefore indicative of a certain type of epithelial 'stem cells'. Acts as a promoter of epithelial proliferation by acting a regulator of immune response in skin: promotes Th1/Th17-dominated immune environment contributing to the development of basaloid skin tumors. May act as an autoantigen in the immunopathogenesis of psoriasis, with certain peptide regions being a major target for autoreactive T-cells and hence causing their proliferation. The sequence is that of Keratin, type I cytoskeletal 17 (Krt17) from Mus musculus (Mouse).